We begin with the raw amino-acid sequence, 102 residues long: EPIDERMAL PATTERNING FACTOR-like protein 9 (102 aa).

Positions 1-31 (MKHEMMNIKPRCITIFFLLFALLLGNYVVQA) are cleaved as a signal peptide. Disulfide bonds link Cys-65-Cys-98, Cys-70-Cys-77, and Cys-73-Cys-100.

Belongs to the plant cysteine rich small secretory peptide family. Epidermal patterning factor subfamily. As to quaternary structure, interacts with ERECTA and TMM. Expressed in immature organs, including leaves, stems and flower buds, but not in roots, shoot apical meristem and petals. Detected in the mesophyll tissues but not in the epidermal tissues where stomata develop.

The protein localises to the secreted. It is found in the extracellular space. The protein resides in the apoplast. Functionally, positively regulates stomatal density and patterning. Acts by competing with EPF2 (AC Q8LC53) for the same receptors, ERECTA (AC Q42371) and TMM (AC Q9SSD1). Not cleaved by the protease CRSP (AC Q9LNU1). This Arabidopsis thaliana (Mouse-ear cress) protein is EPIDERMAL PATTERNING FACTOR-like protein 9.